We begin with the raw amino-acid sequence, 249 residues long: uncharacterized protein (249 aa).

This sequence belongs to the ycf73 family.

It is found in the plastid. The protein resides in the chloroplast. This is an uncharacterized protein from Oryza sativa (Rice).